The primary structure comprises 410 residues: NADH-quinone oxidoreductase subunit H (410 aa).

The next 9 helical transmembrane spans lie at 16-36, 84-104, 124-144, 165-185, 198-218, 260-280, 288-308, 320-340, and 353-373; these read LILAKSLGVFVFLLLTVLAAI, WIYLAAPVISVIPAFMAFAVI, LPVAVLYILAVTSIGVYGIVL, VISYEIAMALSFVAVFIYAGT, VWFIFLLLPSFLVYLTSMVGE, VSALATTLFLGGWHAPWPISI, WWPLLWFTAKVWLFLFFFMWL, FMRLGWKLLIPVSLAWIAIVA, and WVTALIGVAGVAAILASLLAW. Positions 384–410 are disordered; the sequence is SHSPPAQSSDHGAFPVPPLPVKEPADA.

It belongs to the complex I subunit 1 family. As to quaternary structure, NDH-1 is composed of 14 different subunits. Subunits NuoA, H, J, K, L, M, N constitute the membrane sector of the complex.

The protein localises to the cell membrane. The catalysed reaction is a quinone + NADH + 5 H(+)(in) = a quinol + NAD(+) + 4 H(+)(out). In terms of biological role, NDH-1 shuttles electrons from NADH, via FMN and iron-sulfur (Fe-S) centers, to quinones in the respiratory chain. The immediate electron acceptor for the enzyme in this species is believed to be menaquinone. Couples the redox reaction to proton translocation (for every two electrons transferred, four hydrogen ions are translocated across the cytoplasmic membrane), and thus conserves the redox energy in a proton gradient. In Mycolicibacterium gilvum (strain PYR-GCK) (Mycobacterium gilvum (strain PYR-GCK)), this protein is NADH-quinone oxidoreductase subunit H.